Consider the following 784-residue polypeptide: Ent-kaurene synthase 1, chloroplastic (784 aa).

The N-terminal 28 residues, 1-28 (MNLSLCIASPLLTKSSRPTALSAIHTAS), are a transit peptide targeting the chloroplast. The Mg(2+) site is built by Asp528, Asp532, Asn672, and Glu680. The DDXXD motif signature appears at 528–532 (DDFFD).

This sequence belongs to the terpene synthase family. It depends on Mg(2+) as a cofactor. In terms of tissue distribution, accumulates in leaves.

The protein resides in the plastid. The protein localises to the chloroplast. It catalyses the reaction ent-copalyl diphosphate = ent-kaur-16-ene + diphosphate. The protein operates within secondary metabolite biosynthesis; terpenoid biosynthesis. It participates in plant hormone biosynthesis; gibberellin biosynthesis. In terms of biological role, involved in the biosynthesis of ent-kaurene diterpenoids natural products such as oridonin, miltiradiene, eriocalyxin B and nezukol, known to exhibit antitumor, anti-inflammatory and antibacterial activities, and in the production of gibberellins phytohormones. Catalyzes the conversion of ent-copalyl diphosphate (ent-CPP) to ent-kaurene. This Stevia rebaudiana (Stevia) protein is Ent-kaurene synthase 1, chloroplastic.